We begin with the raw amino-acid sequence, 142 residues long: Ribosome-binding factor A (142 aa).

The segment covering 118-130 (DKAKQKQAGREDD) has biased composition (basic and acidic residues). The segment at 118-142 (DKAKQKQAGREDDTPSVDEQEKDTD) is disordered. Acidic residues predominate over residues 131–142 (TPSVDEQEKDTD).

The protein belongs to the RbfA family. Monomer. Binds 30S ribosomal subunits, but not 50S ribosomal subunits or 70S ribosomes.

The protein localises to the cytoplasm. Its function is as follows. One of several proteins that assist in the late maturation steps of the functional core of the 30S ribosomal subunit. Associates with free 30S ribosomal subunits (but not with 30S subunits that are part of 70S ribosomes or polysomes). Required for efficient processing of 16S rRNA. May interact with the 5'-terminal helix region of 16S rRNA. The polypeptide is Ribosome-binding factor A (Shewanella denitrificans (strain OS217 / ATCC BAA-1090 / DSM 15013)).